Here is a 255-residue protein sequence, read N- to C-terminus: Flagellar brake protein YcgR (255 aa).

The region spanning 122 to 240 is the PilZ domain; the sequence is QRRTYFRINT…ERDLQQVIFE (119 aa).

This sequence belongs to the YcgR family. In terms of assembly, monomer. Interacts with the flagellar basal bodies.

It localises to the bacterial flagellum basal body. Functionally, acts as a flagellar brake, regulating swimming and swarming in a bis-(3'-5') cyclic diguanylic acid (c-di-GMP)-dependent manner. Binds 1 c-di-GMP dimer per subunit. Increasing levels of c-di-GMP lead to decreased motility. This chain is Flagellar brake protein YcgR, found in Pectobacterium carotovorum subsp. carotovorum (strain PC1).